The sequence spans 647 residues: MFQDNPLLAQLKQQLHAQTPRVEGLVKGTDKGFGFLEVDGQKSYFIPPPQMKKVMHGDRIIAAVHTNNDKESAEPEELVEPFLTRFVGRVQKKEGDNRLWIIPDHPLLKDAIPCRPIKSLTHPFADQDWAVAEMRRHPLKGDKHFQAELTDFITDKDDHFAPWWVTLMRHQLERNAPEVDSETLTLHDDLPREDLTALSFVTIDSASTEDMDDALYIRKEENGQLSLYIAIADPTAYIQPNSELDTIAAQRALTNYLPGFNIPMLPRELSDNLCSLRPNEKRPALVCQVGIMEDGALTDEIHFYSAWVESKAKLVYDNISDWLEGEETQWAPENEIVHEQVMLLKEMSEKRHVWREQHALVFKERPDYRFILDDSGNVLDIVAEKRRTANRIVEEAMITANICAAKVLSRNLGFGIYNVHTGFDPLYIDQVSQTLKEHGIETNADELLTLEGFCRLRRELDNQPNQFLDSRIRRFQNFAEIKTEPGPHFGLGLEAYATWTSPIRKYSDILNHRLLKAIISKSAAEKPQDEDCVRIAERRRANRMAERDVGDWLYARFLKPFAGTESTFNAEIIDITRGGIRVRLVENGAIAFIPAPFLHAVRDEIQCSQETGSVIIKGETAYKLNDIIPVRIEDVKLETRNIVARPI.

Residues 192–520 (REDLTALSFV…NHRLLKAIIS (329 aa)) enclose the RNB domain. The region spanning 565-647 (ESTFNAEIID…ETRNIVARPI (83 aa)) is the S1 motif domain.

Belongs to the RNR ribonuclease family. RNase II subfamily.

Its subcellular location is the cytoplasm. The enzyme catalyses Exonucleolytic cleavage in the 3'- to 5'-direction to yield nucleoside 5'-phosphates.. In terms of biological role, involved in mRNA degradation. Hydrolyzes single-stranded polyribonucleotides processively in the 3' to 5' direction. This Proteus mirabilis (strain HI4320) protein is Exoribonuclease 2.